A 223-amino-acid chain; its full sequence is Putative germin-like protein 2-2 (223 aa).

Positions Met1–Ala28 are cleaved as a signal peptide. An intrachain disulfide couples Cys38 to Cys53. In terms of domain architecture, Cupin type-1 spans Ser67 to Asp217. Asn74 and Asn82 each carry an N-linked (GlcNAc...) asparagine glycan. Mn(2+)-binding residues include His115, His117, Glu122, and His163. N-linked (GlcNAc...) asparagine glycosylation is present at Asn168.

It belongs to the germin family. In terms of assembly, oligomer (believed to be a pentamer but probably hexamer).

The protein localises to the secreted. It localises to the extracellular space. Its subcellular location is the apoplast. In terms of biological role, may play a role in plant defense. Probably has no oxalate oxidase activity even if the active site is conserved. This is Putative germin-like protein 2-2 from Oryza sativa subsp. japonica (Rice).